Reading from the N-terminus, the 159-residue chain is Fatty acid-binding protein homolog 1 (159 aa).

An N-terminal signal peptide occupies residues Met-1 to Ala-17.

It belongs to the calycin superfamily. Fatty-acid binding protein (FABP) family. As to expression, first detected in hypodermal precursor cells at the time of gastrulation. From the two-fold stage through to three-fold stages, expression is localized exclusively to hyp-7 but disappears in newly hatched L1s and subsequent developmental stages. Expression from L1 to adult stages is found in a single neuron in the ventral cord with a process into the nerve ring.

The protein localises to the secreted. In terms of biological role, may play a role in sequestering potentially toxic fatty acids and their peroxidation products, or it may be involved in the maintenance of the impermeable lipid layer of the eggshell. The chain is Fatty acid-binding protein homolog 1 (lbp-1) from Caenorhabditis elegans.